Here is an 81-residue protein sequence, read N- to C-terminus: Large ribosomal subunit protein bL31 (81 aa).

Zn(2+) is bound by residues C16, C18, C38, and C41.

This sequence belongs to the bacterial ribosomal protein bL31 family. Type A subfamily. Part of the 50S ribosomal subunit. Zn(2+) is required as a cofactor.

Functionally, binds the 23S rRNA. The protein is Large ribosomal subunit protein bL31 of Mycobacterium marinum (strain ATCC BAA-535 / M).